The chain runs to 274 residues: NAD kinase (274 aa).

The Proton acceptor role is filled by aspartate 59. NAD(+) contacts are provided by residues 59–60 (DG), lysine 64, 128–129 (ND), aspartate 158, 169–174 (TAYALS), and alanine 193.

This sequence belongs to the NAD kinase family. Requires a divalent metal cation as cofactor.

It is found in the cytoplasm. It catalyses the reaction NAD(+) + ATP = ADP + NADP(+) + H(+). Functionally, involved in the regulation of the intracellular balance of NAD and NADP, and is a key enzyme in the biosynthesis of NADP. Catalyzes specifically the phosphorylation on 2'-hydroxyl of the adenosine moiety of NAD to yield NADP. The sequence is that of NAD kinase from Petrotoga mobilis (strain DSM 10674 / SJ95).